Reading from the N-terminus, the 156-residue chain is Small ribosomal subunit protein bS6 (156 aa).

Positions 98–156 (GHDFRDQRSHHGQAGEFRKREPQQKSKEQSEFSKEKKSFSKSVTKKTVVSKPKETKEEK) are disordered. Over residues 113-135 (EFRKREPQQKSKEQSEFSKEKKS) the composition is skewed to basic and acidic residues. Over residues 137-147 (SKSVTKKTVVS) the composition is skewed to low complexity.

Belongs to the bacterial ribosomal protein bS6 family.

Its function is as follows. Binds together with bS18 to 16S ribosomal RNA. This Mycoplasmopsis synoviae (strain 53) (Mycoplasma synoviae) protein is Small ribosomal subunit protein bS6.